Reading from the N-terminus, the 20-residue chain is LSGKPAKXHLSVGEQAIAMT.

The segment at 1-20 is disordered; it reads LSGKPAKXHLSVGEQAIAMT.

Belongs to the cytochrome c oxidase VIII family. Component of the cytochrome c oxidase (complex IV, CIV), a multisubunit enzyme composed of 14 subunits. The complex is composed of a catalytic core of 3 subunits MT-CO1, MT-CO2 and MT-CO3, encoded in the mitochondrial DNA, and 11 supernumerary subunits COX4I, COX5A, COX5B, COX6A, COX6B, COX6C, COX7A, COX7B, COX7C, COX8 and NDUFA4, which are encoded in the nuclear genome. The complex exists as a monomer or a dimer and forms supercomplexes (SCs) in the inner mitochondrial membrane with NADH-ubiquinone oxidoreductase (complex I, CI) and ubiquinol-cytochrome c oxidoreductase (cytochrome b-c1 complex, complex III, CIII), resulting in different assemblies (supercomplex SCI(1)III(2)IV(1) and megacomplex MCI(2)III(2)IV(2)).

Its subcellular location is the mitochondrion inner membrane. It participates in energy metabolism; oxidative phosphorylation. In terms of biological role, component of the cytochrome c oxidase, the last enzyme in the mitochondrial electron transport chain which drives oxidative phosphorylation. The respiratory chain contains 3 multisubunit complexes succinate dehydrogenase (complex II, CII), ubiquinol-cytochrome c oxidoreductase (cytochrome b-c1 complex, complex III, CIII) and cytochrome c oxidase (complex IV, CIV), that cooperate to transfer electrons derived from NADH and succinate to molecular oxygen, creating an electrochemical gradient over the inner membrane that drives transmembrane transport and the ATP synthase. Cytochrome c oxidase is the component of the respiratory chain that catalyzes the reduction of oxygen to water. Electrons originating from reduced cytochrome c in the intermembrane space (IMS) are transferred via the dinuclear copper A center (CU(A)) of subunit 2 and heme A of subunit 1 to the active site in subunit 1, a binuclear center (BNC) formed by heme A3 and copper B (CU(B)). The BNC reduces molecular oxygen to 2 water molecules using 4 electrons from cytochrome c in the IMS and 4 protons from the mitochondrial matrix. This Oncorhynchus mykiss (Rainbow trout) protein is Cytochrome c oxidase subunit 8B, mitochondrial.